Reading from the N-terminus, the 676-residue chain is uncharacterized protein (676 aa).

This is an uncharacterized protein from Magallana gigas (Pacific oyster).